Here is a 573-residue protein sequence, read N- to C-terminus: 2-succinyl-5-enolpyruvyl-6-hydroxy-3-cyclohexene-1-carboxylate synthase (573 aa).

It belongs to the TPP enzyme family. MenD subfamily. In terms of assembly, homodimer. Mg(2+) serves as cofactor. Requires Mn(2+) as cofactor. The cofactor is thiamine diphosphate.

The catalysed reaction is isochorismate + 2-oxoglutarate + H(+) = 5-enolpyruvoyl-6-hydroxy-2-succinyl-cyclohex-3-ene-1-carboxylate + CO2. The protein operates within quinol/quinone metabolism; 1,4-dihydroxy-2-naphthoate biosynthesis; 1,4-dihydroxy-2-naphthoate from chorismate: step 2/7. It participates in quinol/quinone metabolism; menaquinone biosynthesis. Its function is as follows. Catalyzes the thiamine diphosphate-dependent decarboxylation of 2-oxoglutarate and the subsequent addition of the resulting succinic semialdehyde-thiamine pyrophosphate anion to isochorismate to yield 2-succinyl-5-enolpyruvyl-6-hydroxy-3-cyclohexene-1-carboxylate (SEPHCHC). This Shewanella baltica (strain OS155 / ATCC BAA-1091) protein is 2-succinyl-5-enolpyruvyl-6-hydroxy-3-cyclohexene-1-carboxylate synthase.